The chain runs to 619 residues: 2-succinyl-5-enolpyruvyl-6-hydroxy-3-cyclohexene-1-carboxylate synthase (619 aa).

Residues 385–398 (SSAHQSLAATNSDS) show a composition bias toward polar residues. Residues 385–415 (SSAHQSLAATNSDSSTDDIIENTDEEGSNES) form a disordered region. A compositionally biased stretch (acidic residues) spans 399–413 (STDDIIENTDEEGSN).

The protein belongs to the TPP enzyme family. MenD subfamily. Homodimer. Mg(2+) is required as a cofactor. It depends on Mn(2+) as a cofactor. The cofactor is thiamine diphosphate.

The enzyme catalyses isochorismate + 2-oxoglutarate + H(+) = 5-enolpyruvoyl-6-hydroxy-2-succinyl-cyclohex-3-ene-1-carboxylate + CO2. The protein operates within quinol/quinone metabolism; 1,4-dihydroxy-2-naphthoate biosynthesis; 1,4-dihydroxy-2-naphthoate from chorismate: step 2/7. Its pathway is quinol/quinone metabolism; menaquinone biosynthesis. Its function is as follows. Catalyzes the thiamine diphosphate-dependent decarboxylation of 2-oxoglutarate and the subsequent addition of the resulting succinic semialdehyde-thiamine pyrophosphate anion to isochorismate to yield 2-succinyl-5-enolpyruvyl-6-hydroxy-3-cyclohexene-1-carboxylate (SEPHCHC). In Haloquadratum walsbyi (strain DSM 16790 / HBSQ001), this protein is 2-succinyl-5-enolpyruvyl-6-hydroxy-3-cyclohexene-1-carboxylate synthase.